Reading from the N-terminus, the 239-residue chain is Sugar fermentation stimulation protein homolog (239 aa).

Belongs to the SfsA family.

The sequence is that of Sugar fermentation stimulation protein homolog from Mannheimia succiniciproducens (strain KCTC 0769BP / MBEL55E).